The following is a 479-amino-acid chain: Something about silencing protein 10 (479 aa).

Basic residues predominate over residues 1–10; the sequence is MVGRSRRRGA. Disordered regions lie at residues 1–45 and 62–166; these read MVGR…SYYQ and KGWN…EEAQ. The residue at position 8 (Arg8) is an Omega-N-methylarginine. Residues 11-21 are compositionally biased toward low complexity; sequence AKWAAVRAKAG. Ser37 carries the post-translational modification Phosphoserine. Residues 69–111 show a composition bias toward acidic residues; that stretch reads SGDEEDGEEEEEEVLALDMDDEDDEDGGNAGEEEEEENADDDG. Lys144 carries the N6-acetyllysine; alternate modification. Residue Lys144 forms a Glycyl lysine isopeptide (Lys-Gly) (interchain with G-Cter in SUMO2); alternate linkage. The residue at position 150 (Ser150) is a Phosphoserine. Residues 153–165 show a composition bias toward acidic residues; sequence EAEEEEREEEEEA. The residue at position 362 (Thr362) is a Phosphothreonine. Ser365 and Ser368 each carry phosphoserine. At Arg385 the chain carries Citrulline. Residues 419–466 form a disordered region; it reads RGLTPRRKKIDRNPRVKHREKFRRAKIRRRGQVREVRKEEQRYSGELS. Basic residues predominate over residues 422–449; the sequence is TPRRKKIDRNPRVKHREKFRRAKIRRRG. Positions 450-461 are enriched in basic and acidic residues; the sequence is QVREVRKEEQRY.

This sequence belongs to the SAS10 family. In terms of assembly, part of the small subunit (SSU) processome, composed of more than 70 proteins and the RNA chaperone small nucleolar RNA (snoRNA) U3. In terms of processing, citrullinated by PADI4.

The protein resides in the nucleus. It localises to the nucleolus. Its function is as follows. Essential for gene silencing: has a role in the structure of silenced chromatin. Plays a role in the developing brain. Part of the small subunit (SSU) processome, first precursor of the small eukaryotic ribosomal subunit. During the assembly of the SSU processome in the nucleolus, many ribosome biogenesis factors, an RNA chaperone and ribosomal proteins associate with the nascent pre-rRNA and work in concert to generate RNA folding, modifications, rearrangements and cleavage as well as targeted degradation of pre-ribosomal RNA by the RNA exosome. The sequence is that of Something about silencing protein 10 from Homo sapiens (Human).